A 169-amino-acid chain; its full sequence is ATP-dependent Clp protease adapter protein CLPS2, chloroplastic (169 aa).

The transit peptide at 1–33 (MLATRCKCNLPSRSFVAPARSVRTRALHVEGRF) directs the protein to the chloroplast. Residues 67–92 (DAKTDNGNNGSNTDKDKKSPPGGGNY) form a disordered region.

Belongs to the ClpS family.

Its subcellular location is the plastid. The protein resides in the chloroplast stroma. Its function is as follows. Small adapter protein that modulate the activity of plastid Clp protease system (CLPC). Probably involved in substrate selection for plastid CLPC. The polypeptide is ATP-dependent Clp protease adapter protein CLPS2, chloroplastic (Chlamydomonas reinhardtii (Chlamydomonas smithii)).